The following is a 181-amino-acid chain: Large ribosomal subunit protein bL17 (181 aa).

The disordered stretch occupies residues 129 to 181 (AEKSEKSAKTAKAAKAPAKKATAKKASTKAVAAKKKAVKKAQKKDRAASAARA). Basic residues predominate over residues 145–171 (PAKKATAKKASTKAVAAKKKAVKKAQK).

The protein belongs to the bacterial ribosomal protein bL17 family. As to quaternary structure, part of the 50S ribosomal subunit. Contacts protein L32.

This is Large ribosomal subunit protein bL17 from Bdellovibrio bacteriovorus (strain ATCC 15356 / DSM 50701 / NCIMB 9529 / HD100).